The chain runs to 334 residues: Ferric enterobactin transport system permease protein FepD (334 aa).

Topologically, residues 1-9 (MSGSVAVTR) are periplasmic. The chain crosses the membrane as a helical span at residues 10-30 (AIAVPGLLLLLIIATALSLLI). Topologically, residues 31 to 63 (GAKSLPASVVLEAFSGTCQSADCTIVLDARLPR) are cytoplasmic. The chain crosses the membrane as a helical span at residues 64–84 (TLAGLLAGGALGLAGALMQTL). Topologically, residues 85–92 (TRNPLADP) are periplasmic. Residues 93-113 (GLLGVNAGASFAIVLGAALFG) traverse the membrane as a helical segment. The Cytoplasmic segment spans residues 114-120 (YSSAQEQ). The helical transmembrane segment at 121-141 (LAMAFAGALVASLIVAFTGSQ) threads the bilayer. The Periplasmic portion of the chain corresponds to 142–151 (GGGQLSPVRL). Residues 152 to 172 (TLAGVALAAVLEGLTSGIALL) traverse the membrane as a helical segment. Over 173 to 192 (NPDVYDQLRFWQAGSLDIRN) the chain is Cytoplasmic. The helical transmembrane segment at 193–213 (LHTLKVVLIPVLIAGATALLL) threads the bilayer. Topologically, residues 214-241 (SRALNSLSLGSDTATALGSRVARTQLIG) are periplasmic. Residues 242-262 (LLAITVLCGSATAIVGPIAFI) traverse the membrane as a helical segment. The Cytoplasmic portion of the chain corresponds to 263-279 (GLMMPHMARWLVGADHR). Residues 280–300 (WSLPVTLLATPALLLFADIIG) traverse the membrane as a helical segment. The Periplasmic segment spans residues 301–305 (RVIVP). The chain crosses the membrane as a helical span at residues 306 to 326 (GELRVSVVSAFIGAPVLIFLV). Residues 327 to 334 (RRKTRGGA) are Cytoplasmic-facing.

The protein belongs to the binding-protein-dependent transport system permease family. FecCD subfamily. As to quaternary structure, the complex is composed of two ATP-binding proteins (FepC), two transmembrane proteins (FepD and FepG) and a solute-binding protein (FepB).

It is found in the cell inner membrane. In terms of biological role, part of the ABC transporter complex FepBDGC involved in ferric enterobactin uptake. Responsible for the translocation of the substrate across the membrane. This chain is Ferric enterobactin transport system permease protein FepD (fepD), found in Escherichia coli (strain K12).